An 878-amino-acid chain; its full sequence is Multiple C2 and transmembrane domain-containing protein 2 (878 aa).

2 disordered regions span residues 20-40 and 143-178; these read LINLSKKKAKKSPSKPLDLRV and KPSLGRDAPEEHDKTHGNDDLNASMTSQHFEEESTL. The segment covering 149 to 161 has biased composition (basic and acidic residues); that stretch reads DAPEEHDKTHGND. 3 consecutive C2 domains span residues 177–292, 334–452, and 486–607; these read TLGE…EHIL, SKSS…CLEL, and PSER…CYVL. Ca(2+)-binding residues include Asp210, Asp216, Asp263, Asp265, and Asp270. Ca(2+) is bound by residues Asp525, Asp531, Asp577, Asp579, and Asp585. A helical transmembrane segment spans residues 694–714; it reads FVVFLVTVWNFELYMIPLALL. Residues 728-752 form a disordered region; the sequence is KASSTQDSQESTDVEEEGKEEEKES. The segment covering 737–746 has biased composition (acidic residues); sequence ESTDVEEEGK. Residues 794–814 traverse the membrane as a helical segment; that stretch reads PFLSLLACLILAITTVILYFI.

The protein belongs to the MCTP family. Requires Ca(2+) as cofactor.

It localises to the membrane. In terms of biological role, might play a role in the development of cardiac outflow tract. This Mus musculus (Mouse) protein is Multiple C2 and transmembrane domain-containing protein 2 (Mctp2).